Here is a 454-residue protein sequence, read N- to C-terminus: Ribosomal protein uS12 methylthiotransferase RimO (454 aa).

One can recognise an MTTase N-terminal domain in the interval 9–124 (PKIGFVSLGC…VMDAVHLHMP (116 aa)). Cys18, Cys54, Cys83, Cys155, Cys159, and Cys162 together coordinate [4Fe-4S] cluster. Positions 141–382 (LTPKHFAYLK…MLLQEEISKK (242 aa)) constitute a Radical SAM core domain. The TRAM domain occupies 385–454 (QAKVGKTMRV…ADAHDLWAEA (70 aa)).

It belongs to the methylthiotransferase family. RimO subfamily. [4Fe-4S] cluster serves as cofactor.

The protein localises to the cytoplasm. It carries out the reaction L-aspartate(89)-[ribosomal protein uS12]-hydrogen + (sulfur carrier)-SH + AH2 + 2 S-adenosyl-L-methionine = 3-methylsulfanyl-L-aspartate(89)-[ribosomal protein uS12]-hydrogen + (sulfur carrier)-H + 5'-deoxyadenosine + L-methionine + A + S-adenosyl-L-homocysteine + 2 H(+). Functionally, catalyzes the methylthiolation of an aspartic acid residue of ribosomal protein uS12. The chain is Ribosomal protein uS12 methylthiotransferase RimO from Herminiimonas arsenicoxydans.